Reading from the N-terminus, the 338-residue chain is tRNA N6-adenosine threonylcarbamoyltransferase (338 aa).

Fe cation is bound by residues H111 and H115. Residues 134–138, D167, G180, and N272 contribute to the substrate site; that span reads LVSGG. Fe cation is bound at residue D300.

Belongs to the KAE1 / TsaD family. The cofactor is Fe(2+).

The protein resides in the cytoplasm. It carries out the reaction L-threonylcarbamoyladenylate + adenosine(37) in tRNA = N(6)-L-threonylcarbamoyladenosine(37) in tRNA + AMP + H(+). In terms of biological role, required for the formation of a threonylcarbamoyl group on adenosine at position 37 (t(6)A37) in tRNAs that read codons beginning with adenine. Is involved in the transfer of the threonylcarbamoyl moiety of threonylcarbamoyl-AMP (TC-AMP) to the N6 group of A37, together with TsaE and TsaB. TsaD likely plays a direct catalytic role in this reaction. The chain is tRNA N6-adenosine threonylcarbamoyltransferase from Shewanella putrefaciens (strain CN-32 / ATCC BAA-453).